Consider the following 180-residue polypeptide: Translation initiation factor IF-3 (180 aa).

Belongs to the IF-3 family. As to quaternary structure, monomer.

The protein localises to the cytoplasm. IF-3 binds to the 30S ribosomal subunit and shifts the equilibrium between 70S ribosomes and their 50S and 30S subunits in favor of the free subunits, thus enhancing the availability of 30S subunits on which protein synthesis initiation begins. This is Translation initiation factor IF-3 from Pasteurella multocida (strain Pm70).